Here is a 383-residue protein sequence, read N- to C-terminus: D-alanine--D-alanine ligase (383 aa).

The 205-residue stretch at 169–373 (KALLRAAGLP…YPQLVDRLVR (205 aa)) folds into the ATP-grasp domain. Residue 196–251 (QERLGLPVFVKPARGGSSIGISRVEAWADLDTAIKAARASDPKVLVESAIVGREIE) coordinates ATP. Mg(2+) contacts are provided by Asp327, Glu340, and Asn342.

Belongs to the D-alanine--D-alanine ligase family. Mg(2+) serves as cofactor. It depends on Mn(2+) as a cofactor.

It is found in the cytoplasm. The enzyme catalyses 2 D-alanine + ATP = D-alanyl-D-alanine + ADP + phosphate + H(+). It participates in cell wall biogenesis; peptidoglycan biosynthesis. Functionally, cell wall formation. This Frankia casuarinae (strain DSM 45818 / CECT 9043 / HFP020203 / CcI3) protein is D-alanine--D-alanine ligase.